We begin with the raw amino-acid sequence, 334 residues long: Glyceraldehyde-3-phosphate dehydrogenase (334 aa).

Residues 12–13 and glycine 111 contribute to the NAD(+) site; that span reads TI. Residue 140 to 142 participates in D-glyceraldehyde 3-phosphate binding; that stretch reads SCN. Cysteine 141 (nucleophile) is an active-site residue. Residue arginine 167 coordinates NAD(+). 192–193 serves as a coordination point for D-glyceraldehyde 3-phosphate; it reads HG. Glutamine 298 provides a ligand contact to NAD(+).

This sequence belongs to the glyceraldehyde-3-phosphate dehydrogenase family. In terms of assembly, homotetramer.

It is found in the cytoplasm. It carries out the reaction D-glyceraldehyde 3-phosphate + phosphate + NADP(+) = (2R)-3-phospho-glyceroyl phosphate + NADPH + H(+). The catalysed reaction is D-glyceraldehyde 3-phosphate + phosphate + NAD(+) = (2R)-3-phospho-glyceroyl phosphate + NADH + H(+). It functions in the pathway carbohydrate degradation; glycolysis; pyruvate from D-glyceraldehyde 3-phosphate: step 1/5. The protein is Glyceraldehyde-3-phosphate dehydrogenase of Thermococcus sibiricus (strain DSM 12597 / MM 739).